The primary structure comprises 2039 residues: Methylcytosine dioxygenase TET1 (2039 aa).

Basic residues predominate over residues 1 to 19 (MSRSRPAKPSKSVKTKLQK). Disordered stretches follow at residues 1-79 (MSRS…AGAA), 119-168 (VVTP…NGEQ), and 227-286 (DNEC…GFPD). Composition is skewed to basic and acidic residues over residues 53–65 (KRRD…EDKT) and 138–149 (IQDEPGVKHSEN). 2 stretches are compositionally biased toward polar residues: residues 150 to 168 (DSVP…NGEQ) and 241 to 265 (QRST…SQVE). The sufficient for binding to genomic CpG islands stretch occupies residues 512-657 (LDLTQGSQAA…NGPKSESMDC (146 aa)). A CXXC-type zinc finger spans residues 567 to 608 (ERRKRKACGVCEPCQQKANCGECTYCKNRKNSHQICKKRKCE). Zn(2+) is bound by residues Cys-574, Cys-577, Cys-580, Cys-586, Cys-589, Cys-592, Cys-602, and Cys-607. 8 disordered regions span residues 613 to 670 (KPEA…QRLD), 711 to 735 (CDAN…NPSP), 820 to 859 (GAEP…VQPS), 882 to 906 (QLSE…HQKT), 964 to 993 (QGYP…SHPL), 1050 to 1129 (VRNA…KKQE), 1209 to 1240 (VEPS…QGQP), and 1322 to 1341 (KREA…DSAQ). Residues 653-670 (ESMDCSRRGHGEEEQRLD) are compositionally biased toward basic and acidic residues. A compositionally biased stretch (polar residues) spans 825–835 (IFNNHPNTHSA). Over residues 840 to 852 (HPPEKVPNKEPKD) the composition is skewed to basic and acidic residues. Residue Ser-854 is modified to Phosphoserine. A compositionally biased stretch (low complexity) spans 884–894 (SEAPSESSSPS). Residues 895–904 (KPEKDEEAHQ) show a composition bias toward basic and acidic residues. The segment covering 1053–1064 (AESTPESLVAKN) has biased composition (polar residues). Positions 1094–1116 (KPKKAQKKARATPHANKRKKKPP) are enriched in basic residues. Polar residues-rich tracts occupy residues 1214 to 1227 (SLPT…SGGQ) and 1326 to 1341 (QTSS…DSAQ). Residues Cys-1371, Cys-1373, Cys-1430, His-1456, and Cys-1458 each contribute to the Zn(2+) site. Arg-1499 lines the 2-oxoglutarate pocket. Zn(2+) contacts are provided by Cys-1509, Cys-1511, Cys-1527, and Cys-1536. Positions 1528–1541 (SWSMYFNGCKFGRS) are interaction with DNA. Residue Lys-1537 forms a Glycyl lysine isopeptide (Lys-Gly) (interchain with G-Cter in ubiquitin) linkage. Cys-1628 contacts Zn(2+). Cys-1644 provides a ligand contact to 2-oxoglutarate. Zn(2+) is bound at residue His-1650. Residues His-1652 and Asp-1654 each coordinate Fe cation. Residue Asn-1657 coordinates substrate. His-1685 is a 2-oxoglutarate binding site. Positions 1734 to 1743 (GKRAKMKQNH) are enriched in basic residues. Disordered stretches follow at residues 1734–1760 (GKRA…ASST) and 1830–1901 (AAHP…LPQL). Over residues 1748–1760 (SHNTKSFSSASST) the composition is skewed to low complexity. Residues 1850 to 1875 (TSPSEQLTSNQSNQQLPLLSNSQKLA) show a composition bias toward polar residues. The span at 1880 to 1895 (EDERHPEADEPQHPED) shows a compositional bias: basic and acidic residues. Residue His-1939 coordinates Fe cation. 1954 to 1956 (RVS) is a 2-oxoglutarate binding site. Residue 1960-1962 (YQH) participates in substrate binding. His-1970 is a Zn(2+) binding site.

This sequence belongs to the TET family. As to quaternary structure, interacts with SIN3A; recruits the transcriptional co-repressor SIN3A to gene promoters. Interacts with HCFC1. Interacts (via C-terminus) with OGT. Found in a complex composed of at least SINHCAF, SIN3A, HDAC1, SAP30, RBBP4, OGT and TET1. Interacts with QSER1. Interacts with NONO (via DNA-binding domain); this interaction recruits TET1 to genomic loci. Interacts with FOXA2; this interaction may recruit TET1 to specific enhancers to preserve their unmethylated status and hence allowing gene expression. Interacts with RNF2. Directly interacts (via C-terminus) with the DCAF1 component of the CRL4(VprBP) E3 ubiquitin-protein ligase complex. Interacts with UHRF1; this interaction induces the recruitment of TET1 to replicating heterochromatin. Interacts with DCAF1. Fe(2+) is required as a cofactor. It depends on Zn(2+) as a cofactor. Post-translationally, glycosylated. Interaction with OGT leads to GlcNAcylation. Monoubiquitinated by the DCX (DDB1-CUL4-X-box) E3 ubiquitin-protein ligase complex called CRL4(VprBP) or CUL4A-RBX1-DDB1-DCAF1/VPRBP complex. In terms of processing, monoubiquitinated by the DCX (DDB1-CUL4-X-box) E3 ubiquitin-protein ligase complex called CRL4(VprBP) or CUL4A-RBX1-DDB1-DCAF1/VPRBP complex; this modification promotes binding to DNA. As to expression, expressed in germinal vesicle (GV) stage and MII-stage oocytes and in early embryos. Also detected somatic tissues, including brain, liver and kidney, but at very low levels. Predominantly expressed in early embryos. Also expressed in embryonic stem cells and in primordial germ cells. Expressed in adult tissues, including brain cortex, cerebellum, heart, kidney, liver, muscle and spleen, although at much lower levels than isoform 2. In the brain, expressed at higher levels in glial cells than in neurons. Expressed in placenta. Expressed in the pituitary, most probably in thyrotropes. In terms of tissue distribution, preferentially expressed in differentiated cells, including in cerebral cortex, cerebellum and thymus. Also expressed in heart, kidney, liver, muscle and spleen at much higher levels than isoform 1. In the brain, expressed at higher levels in neurons than in glial cells. Expressed in the olfactory bulb and in the mammary gland.

The protein localises to the nucleus. It localises to the chromosome. It catalyses the reaction a 5-methyl-2'-deoxycytidine in DNA + 2-oxoglutarate + O2 = a 5-hydroxymethyl-2'-deoxycytidine in DNA + succinate + CO2. The enzyme catalyses a 5-hydroxymethyl-2'-deoxycytidine in DNA + 2-oxoglutarate + O2 = a 5-formyl-2'-deoxycytidine in DNA + succinate + CO2 + H2O. It carries out the reaction a 5-formyl-2'-deoxycytidine in DNA + 2-oxoglutarate + O2 = a 5-carboxyl-2'-deoxycytidine in DNA + succinate + CO2 + H(+). Functionally, dioxygenase that plays a key role in active DNA demethylation, by catalyzing the sequential oxidation of the modified genomic base 5-methylcytosine (5mC) into 5-hydroxymethylcytosine (5hmC), 5-formylcytosine (5fC), and 5-carboxylcytosine (5caC). In addition to its role in DNA demethylation, plays a more general role in chromatin regulation by recruiting histone modifying protein complexes to alter histone marks and chromatin accessibility, leading to both activation and repression of gene expression. Plays therefore a role in many biological processes, including stem cell maintenance, T- and B-cell development, inflammation regulation, iron homeostasis, neural activity or DNA repair. Involved in the balance between pluripotency and lineage commitment of cells it plays a role in embryonic stem cells maintenance and inner cell mass cell specification. Together with QSER1, plays an essential role in the protection and maintenance of transcriptional and developmental programs to inhibit the binding of DNMT3A/3B and therefore de novo methylation. May play a role in the pancreatic beta-cell specification during development. In this context, may function as an upstream epigenetic regulator of PAX4 presumably through direct recruitment by FOXA2 to a PAX4 enhancer to preserve its unmethylated status, thereby potentiating PAX4 expression to adopt beta-cell fate during endocrine lineage commitment. Under DNA hypomethylation conditions, such as in female meiotic germ cells, may induce epigenetic reprogramming of pericentromeric heterochromatin (PCH), the constitutive heterochromatin of pericentromeric regions. PCH forms chromocenters in the interphase nucleus and chromocenters cluster at the prophase of meiosis. In this context, may also be essential for chromocenter clustering in a catalytic activity-independent manner, possibly through the recruitment polycomb repressive complex 1 (PRC1) to the chromocenters. During embryonic development, may be required for normal meiotic progression in oocytes and meiotic gene activation. Binds preferentially to DNA containing cytidine-phosphate-guanosine (CpG) dinucleotides over CpH (H=A, T, and C), hemimethylated-CpG and hemimethylated-hydroxymethyl-CpG. In terms of biological role, dioxygenase that plays a key role in active DNA demethylation. Binds to promoters, particularly to those with high CG content. In hippocampal neurons, isoform 1 regulates the expression of a unique subset of genes compared to isoform 2, although some overlap between both isoforms, hence differentially regulates excitatory synaptic transmission. In hippocampal neuron cell cultures, isoform 1 controls both miniature excitatory postsynaptic current amplitude and frequency. Isoform 1 may regulate genes involved in hippocampal-dependent memory, leading to positive regulation of memory, contrary to isoform 2 that may decrease memory. Its function is as follows. Dioxygenase that plays a key role in active DNA demethylation. As isoform 1, binds to promoters, particularly to those with high CG content, however displays reduced global chromatin affinity compared with isoform 1, leading to decreased global DNA demethylation compared with isoform 1. Contrary to isoform 1, isoform 2 localizes during S phase to sites of ongoing DNA replication in heterochromatin, causing a significant de novo 5hmC formation, globally, and more so in heterochromatin, including LINE 1 interspersed DNA repeats leading to their activation. In hippocampal neurons, isoform 2 regulates the expression of a unique subset of genes compared with isoform 1, although some overlap between both isoforms, hence differentially regulating excitatory synaptic transmission. In hippocampal neuron cell cultures, isoform 2 controls miniature excitatory postsynaptic current frequency, but not amplitude. Isoform 2 may regulate genes involved in hippocampal-dependent memory, leading to negative regulation of memory, contrary to isoform 1 that may improve memory. In immature and partially differentiated gonadotrope cells, represses luteinizing hormone gene LHB expression directly and does not catalyze 5hmC at the gene promoter. This chain is Methylcytosine dioxygenase TET1 (Tet1), found in Mus musculus (Mouse).